Consider the following 95-residue polypeptide: Large ribosomal subunit protein uL23 (95 aa).

The protein belongs to the universal ribosomal protein uL23 family. In terms of assembly, part of the 50S ribosomal subunit. Contacts protein L29, and trigger factor when it is bound to the ribosome.

One of the early assembly proteins it binds 23S rRNA. One of the proteins that surrounds the polypeptide exit tunnel on the outside of the ribosome. Forms the main docking site for trigger factor binding to the ribosome. In Shouchella clausii (strain KSM-K16) (Alkalihalobacillus clausii), this protein is Large ribosomal subunit protein uL23.